Reading from the N-terminus, the 83-residue chain is Small ribosomal subunit protein bS16 (83 aa).

It belongs to the bacterial ribosomal protein bS16 family.

The protein is Small ribosomal subunit protein bS16 of Shewanella denitrificans (strain OS217 / ATCC BAA-1090 / DSM 15013).